We begin with the raw amino-acid sequence, 454 residues long: Argininosuccinate synthase (454 aa).

ATP is bound by residues Ala17–Ser25 and Ala43. An L-citrulline-binding site is contributed by Tyr99. ATP is bound by residues Gly129 and Thr131. L-aspartate contacts are provided by Thr131, Asn135, and Asp136. Asn135 is an L-citrulline binding site. An ATP-binding site is contributed by Asp136. Residues Arg139 and Ser192 each contribute to the L-citrulline site. ATP is bound at residue Asp194. 3 residues coordinate L-citrulline: Thr201, Glu203, and Glu280.

This sequence belongs to the argininosuccinate synthase family. Type 2 subfamily. In terms of assembly, homotetramer.

It is found in the cytoplasm. The enzyme catalyses L-citrulline + L-aspartate + ATP = 2-(N(omega)-L-arginino)succinate + AMP + diphosphate + H(+). The protein operates within amino-acid biosynthesis; L-arginine biosynthesis; L-arginine from L-ornithine and carbamoyl phosphate: step 2/3. The sequence is that of Argininosuccinate synthase from Yersinia enterocolitica serotype O:8 / biotype 1B (strain NCTC 13174 / 8081).